The primary structure comprises 224 residues: Metalloproteinase inhibitor 4 (224 aa).

A signal peptide spans 1-29 (MPWSPLAALSWALVLRLLALLWPPGRGEA). A Zn(2+)-binding site is contributed by Cys-30. Involved in metalloproteinase-binding stretches follow at residues 30-33 (CSCA) and 99-100 (SS). Disulfide bonds link Cys-30-Cys-102, Cys-32-Cys-131, Cys-42-Cys-156, Cys-158-Cys-205, Cys-163-Cys-168, and Cys-176-Cys-197. An NTR domain is found at 30–156 (CSCAPAHPQQ…SLNHHYHQNC (127 aa)).

The protein belongs to the protease inhibitor I35 (TIMP) family. In terms of tissue distribution, expressed in brain, heart, ovary and skeletal muscle.

It localises to the secreted. Complexes with metalloproteinases (such as collagenases) and irreversibly inactivates them by binding to their catalytic zinc cofactor. The polypeptide is Metalloproteinase inhibitor 4 (Timp4) (Mus musculus (Mouse)).